The chain runs to 117 residues: MSKTDLYEQLLTIEQQAKLTFDGITEMKAVLSKVLEENAELEIENKHLREHLQELQQTTEETDTKDLSQGLSKSKQNLQNLYEEGFHICPYFYGSRRENDEPCAFCNDVIYGERTAD.

Residues histidine 87, cysteine 89, cysteine 103, and cysteine 106 each coordinate Zn(2+).

It belongs to the YabA family. Homotetramer. Interacts with both DnaA and DnaN, acting as a bridge between these two proteins. Requires Zn(2+) as cofactor.

Its subcellular location is the cytoplasm. It localises to the nucleoid. Its function is as follows. Involved in control of chromosome replication initiation. Inhibits the cooperative binding of DnaA to the oriC region, thus negatively regulating initiation of chromosome replication. Inhibits the ability of DnaA-ATP to form a helix on DNA; does not disassemble preformed DnaA-DNA helices. Decreases the residence time of DnaA on the chromosome at its binding sites (oriC, replication forks and promoter-binding sites). Tethers DnaA to the replication machinery via the DNA polymerase beta sliding clamp subunit (dnaN). Associates with oriC and other DnaA targets on the chromosome in a DnaA-dependent manner. This is Replication initiation control protein YabA from Latilactobacillus sakei subsp. sakei (strain 23K) (Lactobacillus sakei subsp. sakei).